Here is a 413-residue protein sequence, read N- to C-terminus: NPL4-like protein 1 (413 aa).

Serine 104 carries the post-translational modification Phosphoserine. In terms of domain architecture, MPN spans 131–272; that stretch reads SVSFDRDCAN…ADVHFEPFQM (142 aa).

Belongs to the NPL4 family.

It participates in protein degradation; proteasomal ubiquitin-dependent pathway. Its function is as follows. May be part of a complex that binds ubiquitinated proteins and that is necessary for the export of misfolded proteins from the ER to the cytoplasm, where they are degraded by the proteasome. This Arabidopsis thaliana (Mouse-ear cress) protein is NPL4-like protein 1.